The sequence spans 190 residues: Potassium-transporting ATPase KdpC subunit (190 aa).

Residues Leu-10–Gly-30 traverse the membrane as a helical segment.

Belongs to the KdpC family. In terms of assembly, the system is composed of three essential subunits: KdpA, KdpB and KdpC.

Its subcellular location is the cell inner membrane. In terms of biological role, part of the high-affinity ATP-driven potassium transport (or Kdp) system, which catalyzes the hydrolysis of ATP coupled with the electrogenic transport of potassium into the cytoplasm. This subunit acts as a catalytic chaperone that increases the ATP-binding affinity of the ATP-hydrolyzing subunit KdpB by the formation of a transient KdpB/KdpC/ATP ternary complex. The protein is Potassium-transporting ATPase KdpC subunit of Cronobacter sakazakii (strain ATCC BAA-894) (Enterobacter sakazakii).